The primary structure comprises 149 residues: Ricin B-like lectin (149 aa).

Ser2 is modified (N-acetylserine). 4 residues coordinate a carbohydrate: Asp21, Gly24, Asn39, and Asn47. Positions 110–112 (PNL) are involved in dimerization.

In terms of assembly, homodimer. The N-terminus is blocked.

Lectin specific for terminal, non-reducing N-acetylgalactosamine (Gal-NAc)-containing carbohydrates including N,N'-diacetyllactosediamine/LDN (GalNAcbeta1-4GlcNAc, LacdiNAc). Specific also for carbohydrates containing N-acetylglucosamine (-GlcNAc) or N-acetyllactosamine (-Galbeta1-4GlcNAc) at the reducing end. Agglutinates human blood group A, AB, B and O erythrocytes with a strong preference for group A. Agglutinates bovine erythrocytes with a very low specificity. Binds carbohydrates bivalently, which is required for its biological activity. Exhibits insecticidal activity against the fruit fly D.melanogaster, mosquito A.aegypti, and amoebozoa A.castellanii. Has anti-nutritional activity against Colorado potato beetle L.decemlineata, and against worm C.elegans. Has antiproliferative activity against human leukemic T-cells. Has an immunostimulatory effect on human antigen-presenting dendritic cells, which are subsequently able to induce efficient T-cell immune responses. The sequence is that of Ricin B-like lectin from Clitocybe nebularis (Clouded agaric).